Consider the following 311-residue polypeptide: DNA replication terminus site-binding protein (311 aa).

The protein belongs to the Tus family.

Its subcellular location is the cytoplasm. Functionally, trans-acting protein required for termination of DNA replication. Binds to DNA replication terminator sequences (terA to terF) to prevent the passage of replication forks. The termination efficiency will be affected by the affinity of this protein for the terminator sequence. The polypeptide is DNA replication terminus site-binding protein (Yersinia pseudotuberculosis serotype I (strain IP32953)).